Here is a 231-residue protein sequence, read N- to C-terminus: MLTRKQYELLRFISERLKESGVPPSFDEMKDALDLRSKSGIHRLITALEERGFIRRLPNRARAIEVIKLPELQAAAGNRRGFTPSVIEGNLGKVRASSSADEGERPVAVPVMGRIAAGTPIEALQTRSHTISVPPDMLGSGEHYALEVRGDSMVEAGILDGDMALIQRNESADTGDIVVALIDDEEATLKRFRRRGASIALEPANAAYEVRILPPNRVKIQGKLIGLYRKY.

The segment at residues 26-46 (FDEMKDALDLRSKSGIHRLIT) is a DNA-binding region (H-T-H motif). Catalysis depends on for autocatalytic cleavage activity residues Ser-152 and Lys-190.

Belongs to the peptidase S24 family. In terms of assembly, homodimer.

It carries out the reaction Hydrolysis of Ala-|-Gly bond in repressor LexA.. Represses a number of genes involved in the response to DNA damage (SOS response), including recA and lexA. In the presence of single-stranded DNA, RecA interacts with LexA causing an autocatalytic cleavage which disrupts the DNA-binding part of LexA, leading to derepression of the SOS regulon and eventually DNA repair. This is LexA repressor from Bradyrhizobium diazoefficiens (strain JCM 10833 / BCRC 13528 / IAM 13628 / NBRC 14792 / USDA 110).